Consider the following 97-residue polypeptide: Putative septation protein SpoVG (97 aa).

This sequence belongs to the SpoVG family.

Its function is as follows. Could be involved in septation. This chain is Putative septation protein SpoVG, found in Anaeromyxobacter sp. (strain Fw109-5).